Here is a 57-residue protein sequence, read N- to C-terminus: Kunitz-type serine protease inhibitor homolog delta-dendrotoxin (57 aa).

Residues 5 to 55 (CKLPVRYGPCKKKIPSFYYKWKAKQCLPFDYSGCGGNANRFKTIEECRRTC) form the BPTI/Kunitz inhibitor domain. Disulfide bonds link cysteine 5–cysteine 55, cysteine 14–cysteine 38, and cysteine 30–cysteine 51.

It belongs to the venom Kunitz-type family. As to expression, expressed by the venom gland.

The protein resides in the secreted. Serine protease inhibitor homolog that blocks voltage-gated potassium channels (Kv). In Dendroaspis angusticeps (Eastern green mamba), this protein is Kunitz-type serine protease inhibitor homolog delta-dendrotoxin.